We begin with the raw amino-acid sequence, 85 residues long: U4-theraphotoxin-Hhn1a (85 aa).

An N-terminal signal peptide occupies residues 1-22 (MKVTLIAILTCAAVLVLRTTAA). The propeptide occupies 23 to 48 (EELEAESQLMEVGMPDTELAAVDEER). Disulfide bonds link C52-C66, C56-C77, and C71-C82.

It belongs to the neurotoxin 12 (Hwtx-2) family. 02 (Hwtx-2) subfamily. Monomer. In terms of tissue distribution, expressed by the venom gland.

The protein localises to the secreted. In terms of biological role, neurotoxin active on both insects and mammals. This is U4-theraphotoxin-Hhn1a from Cyriopagopus hainanus (Chinese bird spider).